Consider the following 119-residue polypeptide: Ribonuclease P protein component (119 aa).

Belongs to the RnpA family. In terms of assembly, consists of a catalytic RNA component (M1 or rnpB) and a protein subunit.

The enzyme catalyses Endonucleolytic cleavage of RNA, removing 5'-extranucleotides from tRNA precursor.. Its function is as follows. RNaseP catalyzes the removal of the 5'-leader sequence from pre-tRNA to produce the mature 5'-terminus. It can also cleave other RNA substrates such as 4.5S RNA. The protein component plays an auxiliary but essential role in vivo by binding to the 5'-leader sequence and broadening the substrate specificity of the ribozyme. The chain is Ribonuclease P protein component from Streptococcus pyogenes serotype M12 (strain MGAS2096).